Consider the following 798-residue polypeptide: Phenylalanine--tRNA ligase beta subunit (798 aa).

The tRNA-binding domain maps to 39–148 (GKDLDNVVIG…EDAPIGTEYR (110 aa)). The B5 domain maps to 401–477 (PQRAEISLNL…RMYGFDNIEA (77 aa)). Mg(2+)-binding residues include D455, D461, E464, and E465. One can recognise an FDX-ACB domain in the interval 705–797 (SKYPEVLRDL…IKDKYNGEIR (93 aa)).

Belongs to the phenylalanyl-tRNA synthetase beta subunit family. Type 1 subfamily. As to quaternary structure, tetramer of two alpha and two beta subunits. Requires Mg(2+) as cofactor.

It localises to the cytoplasm. The catalysed reaction is tRNA(Phe) + L-phenylalanine + ATP = L-phenylalanyl-tRNA(Phe) + AMP + diphosphate + H(+). The sequence is that of Phenylalanine--tRNA ligase beta subunit from Fusobacterium nucleatum subsp. nucleatum (strain ATCC 25586 / DSM 15643 / BCRC 10681 / CIP 101130 / JCM 8532 / KCTC 2640 / LMG 13131 / VPI 4355).